A 319-amino-acid chain; its full sequence is Plastid lipid-associated protein 2, chloroplastic (319 aa).

The N-terminal 59 residues, 1–59, are a transit peptide targeting the chloroplast; it reads MATVQFFNQFPCKTRVQSSANSKPLSKPPSSLVPMSALTRRPSFPPGEFAVSRSDFRVR. The segment at 17 to 39 is disordered; it reads QSSANSKPLSKPPSSLVPMSALT. Residues 18 to 36 are compositionally biased toward low complexity; sequence SSANSKPLSKPPSSLVPMS.

The protein belongs to the PAP/fibrillin family. As to expression, expressed almost exclusively in petals. Very weak expression in all other organs.

Its subcellular location is the plastid. The protein resides in the chloroplast. Its function is as follows. May stabilize the accumulated carotenoid structures. This Brassica campestris (Field mustard) protein is Plastid lipid-associated protein 2, chloroplastic (PAP2).